The chain runs to 246 residues: 3-deoxy-manno-octulosonate cytidylyltransferase (246 aa).

Belongs to the KdsB family.

The protein resides in the cytoplasm. It carries out the reaction 3-deoxy-alpha-D-manno-oct-2-ulosonate + CTP = CMP-3-deoxy-beta-D-manno-octulosonate + diphosphate. Its pathway is nucleotide-sugar biosynthesis; CMP-3-deoxy-D-manno-octulosonate biosynthesis; CMP-3-deoxy-D-manno-octulosonate from 3-deoxy-D-manno-octulosonate and CTP: step 1/1. It functions in the pathway bacterial outer membrane biogenesis; lipopolysaccharide biosynthesis. Functionally, activates KDO (a required 8-carbon sugar) for incorporation into bacterial lipopolysaccharide in Gram-negative bacteria. This is 3-deoxy-manno-octulosonate cytidylyltransferase from Rickettsia akari (strain Hartford).